A 426-amino-acid polypeptide reads, in one-letter code: Glucose-1-phosphate adenylyltransferase (426 aa).

Alpha-D-glucose 1-phosphate is bound by residues glycine 165, 180 to 181, and serine 191; that span reads EK.

This sequence belongs to the bacterial/plant glucose-1-phosphate adenylyltransferase family. As to quaternary structure, homotetramer.

The catalysed reaction is alpha-D-glucose 1-phosphate + ATP + H(+) = ADP-alpha-D-glucose + diphosphate. The protein operates within glycan biosynthesis; glycogen biosynthesis. Its function is as follows. Involved in the biosynthesis of ADP-glucose, a building block required for the elongation reactions to produce glycogen. Catalyzes the reaction between ATP and alpha-D-glucose 1-phosphate (G1P) to produce pyrophosphate and ADP-Glc. This Ruminiclostridium cellulolyticum (strain ATCC 35319 / DSM 5812 / JCM 6584 / H10) (Clostridium cellulolyticum) protein is Glucose-1-phosphate adenylyltransferase.